The primary structure comprises 248 residues: Triosephosphate isomerase (248 aa).

Residues Asn10 and Lys12 each coordinate substrate. The active-site Electrophile is His95. Residue Glu165 is the Proton acceptor of the active site.

This sequence belongs to the triosephosphate isomerase family. As to quaternary structure, homodimer.

It carries out the reaction D-glyceraldehyde 3-phosphate = dihydroxyacetone phosphate. The protein operates within carbohydrate biosynthesis; gluconeogenesis. It functions in the pathway carbohydrate degradation; glycolysis; D-glyceraldehyde 3-phosphate from glycerone phosphate: step 1/1. The protein is Triosephosphate isomerase (tpi-1) of Neurospora crassa (strain ATCC 24698 / 74-OR23-1A / CBS 708.71 / DSM 1257 / FGSC 987).